A 223-amino-acid chain; its full sequence is Proteasome subunit beta (223 aa).

A propeptide spans Met-1–Gly-6 (removed in mature form; by autocatalysis). The Nucleophile role is filled by Thr-7.

This sequence belongs to the peptidase T1B family. In terms of assembly, the 20S proteasome core is composed of 14 alpha and 14 beta subunits that assemble into four stacked heptameric rings, resulting in a barrel-shaped structure. The two inner rings, each composed of seven catalytic beta subunits, are sandwiched by two outer rings, each composed of seven alpha subunits. The catalytic chamber with the active sites is on the inside of the barrel. Has a gated structure, the ends of the cylinder being occluded by the N-termini of the alpha-subunits. Is capped at one or both ends by the proteasome regulatory ATPase, PAN.

It is found in the cytoplasm. The catalysed reaction is Cleavage of peptide bonds with very broad specificity.. The formation of the proteasomal ATPase PAN-20S proteasome complex, via the docking of the C-termini of PAN into the intersubunit pockets in the alpha-rings, triggers opening of the gate for substrate entry. Interconversion between the open-gate and close-gate conformations leads to a dynamic regulation of the 20S proteasome proteolysis activity. Functionally, component of the proteasome core, a large protease complex with broad specificity involved in protein degradation. This is Proteasome subunit beta from Methanocaldococcus vulcanius (strain ATCC 700851 / DSM 12094 / M7) (Methanococcus vulcanius).